Reading from the N-terminus, the 502-residue chain is Aspartyl/glutamyl-tRNA(Asn/Gln) amidotransferase subunit B (502 aa).

The protein belongs to the GatB/GatE family. GatB subfamily. In terms of assembly, heterotrimer of A, B and C subunits.

The enzyme catalyses L-glutamyl-tRNA(Gln) + L-glutamine + ATP + H2O = L-glutaminyl-tRNA(Gln) + L-glutamate + ADP + phosphate + H(+). It catalyses the reaction L-aspartyl-tRNA(Asn) + L-glutamine + ATP + H2O = L-asparaginyl-tRNA(Asn) + L-glutamate + ADP + phosphate + 2 H(+). In terms of biological role, allows the formation of correctly charged Asn-tRNA(Asn) or Gln-tRNA(Gln) through the transamidation of misacylated Asp-tRNA(Asn) or Glu-tRNA(Gln) in organisms which lack either or both of asparaginyl-tRNA or glutaminyl-tRNA synthetases. The reaction takes place in the presence of glutamine and ATP through an activated phospho-Asp-tRNA(Asn) or phospho-Glu-tRNA(Gln). The polypeptide is Aspartyl/glutamyl-tRNA(Asn/Gln) amidotransferase subunit B (Pseudarthrobacter chlorophenolicus (strain ATCC 700700 / DSM 12829 / CIP 107037 / JCM 12360 / KCTC 9906 / NCIMB 13794 / A6) (Arthrobacter chlorophenolicus)).